Consider the following 318-residue polypeptide: Putative olfactory receptor 2W6 (318 aa).

Over 1–31 (MGFYHVGQAAFELLTSSFILVGFSDRPHLEL) the chain is Extracellular. The chain crosses the membrane as a helical span at residues 32–52 (IVFVVVLIFYLLTLLGNMTIV). The Cytoplasmic portion of the chain corresponds to 53–63 (LLSALDSRLHT). A helical transmembrane segment spans residues 64-84 (PMYFFLANLSFLDMCFTTGSI). At 85–103 (PQMLYNLWGPDKTISYVGC) the chain is on the extracellular side. A disulfide bridge links Cys103 with Cys185. Residues 104–124 (AIQLYFVLALGGVECVLLAVM) traverse the membrane as a helical segment. Topologically, residues 125–145 (AYDRYAAVCKPLHYTIIMHPR) are cytoplasmic. Residues 146–166 (LCGQLASVAWLSGFGNSLIMA) form a helical membrane-spanning segment. Topologically, residues 167–202 (PQTLMLPRCGHRRVDHFLCEMPALIGMACVDTMMLE) are extracellular. A helical membrane pass occupies residues 203-223 (ALAFALAIFIILAPLILILIS). Topologically, residues 224 to 245 (YGYVGGTVLRIKSAAGRKKAFN) are cytoplasmic. A helical membrane pass occupies residues 246–266 (TCSSHLIVVSLFYGTIIYMYL). Residues 267 to 277 (QPANTYSQDQG) are Extracellular-facing. Residues 278-298 (KFLTLFYTIVTPSVNPLIYTL) form a helical membrane-spanning segment. Residues 299–318 (RNKDVKEAMKKVLGKGSAEI) lie on the Cytoplasmic side of the membrane.

The protein belongs to the G-protein coupled receptor 1 family.

It localises to the cell membrane. Functionally, odorant receptor. The polypeptide is Putative olfactory receptor 2W6 (OR2W6P) (Homo sapiens (Human)).